The following is a 273-amino-acid chain: 4-hydroxy-tetrahydrodipicolinate reductase (273 aa).

NAD(+) contacts are provided by residues 12–17 and Glu38; that span reads GAGGRM. Arg39 contacts NADP(+). Residues 102 to 104 and 126 to 129 contribute to the NAD(+) site; these read GTT and AANF. The Proton donor/acceptor role is filled by His159. Residue His160 coordinates (S)-2,3,4,5-tetrahydrodipicolinate. Lys163 (proton donor) is an active-site residue. 169–170 lines the (S)-2,3,4,5-tetrahydrodipicolinate pocket; the sequence is GT.

It belongs to the DapB family. Homotetramer.

It localises to the cytoplasm. It catalyses the reaction (S)-2,3,4,5-tetrahydrodipicolinate + NAD(+) + H2O = (2S,4S)-4-hydroxy-2,3,4,5-tetrahydrodipicolinate + NADH + H(+). The catalysed reaction is (S)-2,3,4,5-tetrahydrodipicolinate + NADP(+) + H2O = (2S,4S)-4-hydroxy-2,3,4,5-tetrahydrodipicolinate + NADPH + H(+). The protein operates within amino-acid biosynthesis; L-lysine biosynthesis via DAP pathway; (S)-tetrahydrodipicolinate from L-aspartate: step 4/4. Its function is as follows. Catalyzes the conversion of 4-hydroxy-tetrahydrodipicolinate (HTPA) to tetrahydrodipicolinate. The polypeptide is 4-hydroxy-tetrahydrodipicolinate reductase (Yersinia enterocolitica serotype O:8 / biotype 1B (strain NCTC 13174 / 8081)).